The chain runs to 506 residues: NAD(P)H-quinone oxidoreductase subunit 2 (506 aa).

The next 13 membrane-spanning stretches (helical) occupy residues alanine 14–alanine 34, tryptophan 42–tryptophan 62, leucine 79–tryptophan 99, proline 108–glycine 128, leucine 132–tyrosine 152, leucine 167–leucine 187, phenylalanine 206–valine 226, proline 240–isoleucine 260, leucine 276–glutamine 296, methionine 302–threonine 322, valine 330–phenylalanine 350, leucine 374–glycine 394, and leucine 409–isoleucine 429.

It belongs to the complex I subunit 2 family. NDH-1 can be composed of about 15 different subunits; different subcomplexes with different compositions have been identified which probably have different functions.

The protein resides in the cellular thylakoid membrane. It catalyses the reaction a plastoquinone + NADH + (n+1) H(+)(in) = a plastoquinol + NAD(+) + n H(+)(out). It carries out the reaction a plastoquinone + NADPH + (n+1) H(+)(in) = a plastoquinol + NADP(+) + n H(+)(out). NDH-1 shuttles electrons from an unknown electron donor, via FMN and iron-sulfur (Fe-S) centers, to quinones in the respiratory and/or the photosynthetic chain. The immediate electron acceptor for the enzyme in this species is believed to be plastoquinone. Couples the redox reaction to proton translocation, and thus conserves the redox energy in a proton gradient. Cyanobacterial NDH-1 also plays a role in inorganic carbon-concentration. This Prochlorococcus marinus (strain MIT 9215) protein is NAD(P)H-quinone oxidoreductase subunit 2.